We begin with the raw amino-acid sequence, 534 residues long: uncharacterized protein (534 aa).

This is an uncharacterized protein from Escherichia coli (strain K12).